The chain runs to 288 residues: MELRDLQIFKCVAHHKSITGAAKELNYVQSNVTARIKQLENELKTPLFNRHKKGVSLSPEGRKMIEYVNKILKDVEELEQVFLDTEIPSGILKIGTVETVRILPTIIASYYKKYPNVDLSLQAGLTEELIKKVMNHELDGAFISGPLKHSILEQYDVYTEKLTLVTSNKTFNIEDFSTTPILVFNQGCGYRSRLEQWLKDEGVLPNRMMEFNILETILNSVALGLGITVVPESAVMHLAVQGKVYCHPLPEKDSCISTIFIRHKDAYLTNSMRSLLKTIVEHKNMSMA.

In terms of domain architecture, HTH lysR-type spans 1-58; it reads MELRDLQIFKCVAHHKSITGAAKELNYVQSNVTARIKQLENELKTPLFNRHKKGVSLS. Positions 18-37 form a DNA-binding region, H-T-H motif; sequence ITGAAKELNYVQSNVTARIK.

Belongs to the LysR transcriptional regulatory family.

This chain is HTH-type transcriptional regulator CzcR (czcR), found in Bacillus subtilis (strain 168).